Here is a 284-residue protein sequence, read N- to C-terminus: Heat stress transcription factor B-1 (284 aa).

The DNA-binding element occupies 12–106 (PAPFLSKTYQ…LLTDIRRRKS (95 aa)). The disordered stretch occupies residues 118–151 (VGSPSESNSGGGDDHGSSSTSSPGSSKNPGSVEN). A compositionally biased stretch (low complexity) spans 134–148 (SSSTSSPGSSKNPGS). The segment at 147 to 192 (GSVENMVADLSGENEKLKRENNNLSSELAAAKKQRDELVTFLTGHL) is hydrophobic repeat HR-A/B. Positions 247-252 (RKKRDR) match the Nuclear localization signal motif.

The protein belongs to the HSF family. Class B subfamily. As to quaternary structure, homotrimer. In terms of processing, exhibits temperature-dependent phosphorylation.

Its subcellular location is the nucleus. In terms of biological role, transcriptional regulator that specifically binds DNA sequence 5'-AGAAnnTTCT-3' known as heat shock promoter elements (HSE). This chain is Heat stress transcription factor B-1 (HSFB1), found in Arabidopsis thaliana (Mouse-ear cress).